A 692-amino-acid polypeptide reads, in one-letter code: Elongation factor G (692 aa).

The 276-residue stretch at 8–283 (DHVRNIGIMA…AVVDYFPSPS (276 aa)) folds into the tr-type G domain. GTP is bound by residues 17–24 (AHIDAGKT), 81–85 (DTPGH), and 135–138 (NKMD).

This sequence belongs to the TRAFAC class translation factor GTPase superfamily. Classic translation factor GTPase family. EF-G/EF-2 subfamily.

The protein localises to the cytoplasm. Functionally, catalyzes the GTP-dependent ribosomal translocation step during translation elongation. During this step, the ribosome changes from the pre-translocational (PRE) to the post-translocational (POST) state as the newly formed A-site-bound peptidyl-tRNA and P-site-bound deacylated tRNA move to the P and E sites, respectively. Catalyzes the coordinated movement of the two tRNA molecules, the mRNA and conformational changes in the ribosome. This Magnetococcus marinus (strain ATCC BAA-1437 / JCM 17883 / MC-1) protein is Elongation factor G.